A 228-amino-acid polypeptide reads, in one-letter code: R-spondin-4 (228 aa).

The signal sequence occupies residues 1–19 (MRAPLCLLLLLAHAVDMLA). N-linked (GlcNAc...) asparagine glycosylation occurs at N34. Intrachain disulfides connect C35-C41, C38-C47, C50-C69, C73-C88, C91-C98, C95-C104, C107-C118, C122-C135, C139-C181, C150-C157, and C190-C196. The FU repeat unit spans residues 85–128 (ANRCKKCGATCESCFSQDFCIRCKRRFHLYKGKCLPSCPPGTLT). Residues 138–197 (ECEPSPWGSWSPCIHNGKTCGSGWGLETRVREAGPAKQEETASCRVLSESRKCPIKRLCP) enclose the TSP type-1 domain. Positions 193-228 (KRLCPGERNPRQKNRKDRRQRKDRKLERRPHQRGSQ) are disordered. Residues 203–228 (RQKNRKDRRQRKDRKLERRPHQRGSQ) are compositionally biased toward basic residues.

The protein belongs to the R-spondin family. In terms of assembly, binds heparin. Interacts with LGR4, LGR5 and LGR6.

The protein resides in the secreted. Its function is as follows. Activator of the canonical Wnt signaling pathway by acting as a ligand for LGR4-6 receptors. Upon binding to LGR4-6 (LGR4, LGR5 or LGR6), LGR4-6 associate with phosphorylated LRP6 and frizzled receptors that are activated by extracellular Wnt receptors, triggering the canonical Wnt signaling pathway to increase expression of target genes. Also regulates the canonical Wnt/beta-catenin-dependent pathway and non-canonical Wnt signaling by acting as an inhibitor of ZNRF3, an important regulator of the Wnt signaling pathway. The sequence is that of R-spondin-4 (Rspo4) from Mus musculus (Mouse).